We begin with the raw amino-acid sequence, 90 residues long: Chromosomal protein MC1c (90 aa).

Functionally, protects DNA against thermal denaturation and modulates transcription. This is Chromosomal protein MC1c from Methanothrix soehngenii (Methanosaeta concilii).